The sequence spans 1508 residues: uncharacterized protein (1508 aa).

Positions 149–267 (ARRQQWRLRR…ARSLQEHRAT (119 aa)) form a coiled coil. Disordered regions lie at residues 248–268 (ERSE…RATE), 345–403 (SQDW…LAGS), 536–575 (FLKK…GKNL), 725–754 (GLEE…SQEH), and 868–916 (EAKS…AEPW). Residues 868–881 (EAKSKESGEGDKPG) show a composition bias toward basic and acidic residues. Residues 972-1034 (ISRLERDNHR…KGNLGQLQKA (63 aa)) are a coiled coil. Disordered stretches follow at residues 1158–1186 (LAAG…LVWR) and 1204–1246 (KEAH…EEDP). The span at 1163–1172 (TGPSTGTGNS) shows a compositional bias: polar residues. Positions 1204–1215 (KEAHLEKEEKRP) are enriched in basic and acidic residues. Residues 1220-1230 (AQGQALSSLSN) show a composition bias toward polar residues. Residues 1271–1302 (HQASLDEATRLQEELQAKLEELQKKQHEAKLA) adopt a coiled-coil conformation.

This is an uncharacterized protein from Homo sapiens (Human).